A 205-amino-acid chain; its full sequence is High frequency lysogenization protein HflD homolog (205 aa).

The protein belongs to the HflD family.

Its subcellular location is the cytoplasm. The protein localises to the cell inner membrane. The chain is High frequency lysogenization protein HflD homolog from Shewanella sp. (strain MR-4).